The primary structure comprises 599 residues: Putative ATP-dependent helicase YeeB (599 aa).

Residues 30 to 207 (AFEKRNSQYL…LLPEDEELFD (178 aa)) enclose the Helicase ATP-binding domain. 43 to 50 (APPASGKS) provides a ligand contact to ATP. Positions 154–157 (DEFH) match the DEAH box motif. The Helicase C-terminal domain maps to 236 to 408 (QYTSAINEVL…TVNTMLKAIS (173 aa)).

This sequence belongs to the helicase family.

The polypeptide is Putative ATP-dependent helicase YeeB (yeeB) (Bacillus subtilis (strain 168)).